The primary structure comprises 429 residues: Probable M18 family aminopeptidase 2 (429 aa).

The Zn(2+) site is built by His-82, His-156, and His-401.

This sequence belongs to the peptidase M18 family. Zn(2+) is required as a cofactor.

In Pseudomonas aeruginosa (strain UCBPP-PA14), this protein is Probable M18 family aminopeptidase 2.